The chain runs to 90 residues: Probable Fe(2+)-trafficking protein (90 aa).

Belongs to the Fe(2+)-trafficking protein family.

Functionally, could be a mediator in iron transactions between iron acquisition and iron-requiring processes, such as synthesis and/or repair of Fe-S clusters in biosynthetic enzymes. The polypeptide is Probable Fe(2+)-trafficking protein (Acidovorax ebreus (strain TPSY) (Diaphorobacter sp. (strain TPSY))).